Consider the following 98-residue polypeptide: ESAT-6-like protein EsxM (98 aa).

The protein belongs to the WXG100 family. CFP-10 subfamily.

It is found in the secreted. The polypeptide is ESAT-6-like protein EsxM (esxM) (Mycobacterium bovis (strain ATCC BAA-935 / AF2122/97)).